The chain runs to 150 residues: Large ribosomal subunit protein bL9 (150 aa).

The protein belongs to the bacterial ribosomal protein bL9 family.

In terms of biological role, binds to the 23S rRNA. The chain is Large ribosomal subunit protein bL9 from Aromatoleum aromaticum (strain DSM 19018 / LMG 30748 / EbN1) (Azoarcus sp. (strain EbN1)).